Consider the following 141-residue polypeptide: HTH-type transcriptional repressor NsrR (141 aa).

The 128-residue stretch at 2–129 (QLTNFTDFGL…DQHTIQDMLT (128 aa)) folds into the HTH rrf2-type domain. The segment at residues 28–51 (ITVVTETFDVSRNHMVKIINKLGQ) is a DNA-binding region (H-T-H motif). [2Fe-2S] cluster is bound by residues C91, C96, and C102.

The cofactor is [2Fe-2S] cluster.

Functionally, nitric oxide-sensitive repressor of genes involved in protecting the cell against nitrosative stress. May require iron for activity. The sequence is that of HTH-type transcriptional repressor NsrR from Aliivibrio salmonicida (strain LFI1238) (Vibrio salmonicida (strain LFI1238)).